Consider the following 73-residue polypeptide: Guanine nucleotide-binding protein G(I)/G(S)/G(O) subunit gamma-11 (73 aa).

The disordered stretch occupies residues 51–73 (DPLVKGIPEDKNPFKEKGSCVIS). Cysteine methyl ester is present on C70. Residue C70 is the site of S-farnesyl cysteine attachment. A propeptide spans 71–73 (VIS) (removed in mature form).

Belongs to the G protein gamma family. G proteins are composed of 3 units, alpha, beta and gamma. Interacts with beta-1 and beta-3, but not with beta-2. In terms of tissue distribution, abundantly expressed in all tissues tested except for brain.

The protein localises to the cell membrane. Its function is as follows. Guanine nucleotide-binding proteins (G proteins) are involved as a modulator or transducer in various transmembrane signaling systems. The beta and gamma chains are required for the GTPase activity, for replacement of GDP by GTP, and for G protein-effector interaction. The chain is Guanine nucleotide-binding protein G(I)/G(S)/G(O) subunit gamma-11 (GNG11) from Homo sapiens (Human).